The chain runs to 198 residues: MTLYKIGEIVYKNNNNIILESKGEGNLVTICDNSRYSKGEKLKLYLYEVKNDYIQQTYGFKTFKERLLFTDLISIDKIGPKTAMLILDQNWELVANLIAEGDWKEISKINYISDKSAKLICVELKDKWAKIIQNKEVKKFDDITNIKELKQTLNKLGFKASDIDYAVNNISSTKELDLMVEESINLITTQMHANNQTT.

Positions 1–61 are domain I; sequence MTLYKIGEIV…DYIQQTYGFK (61 aa). Residues 62–139 are domain II; sequence TFKERLLFTD…KIIQNKEVKK (78 aa). Residues 140-144 are flexible linker; it reads FDDIT. The interval 144–198 is domain III; sequence TNIKELKQTLNKLGFKASDIDYAVNNISSTKELDLMVEESINLITTQMHANNQTT.

This sequence belongs to the RuvA family. In terms of assembly, homotetramer. Forms an RuvA(8)-RuvB(12)-Holliday junction (HJ) complex. HJ DNA is sandwiched between 2 RuvA tetramers; dsDNA enters through RuvA and exits via RuvB. An RuvB hexamer assembles on each DNA strand where it exits the tetramer. Each RuvB hexamer is contacted by two RuvA subunits (via domain III) on 2 adjacent RuvB subunits; this complex drives branch migration. In the full resolvosome a probable DNA-RuvA(4)-RuvB(12)-RuvC(2) complex forms which resolves the HJ.

It is found in the cytoplasm. In terms of biological role, the RuvA-RuvB-RuvC complex processes Holliday junction (HJ) DNA during genetic recombination and DNA repair, while the RuvA-RuvB complex plays an important role in the rescue of blocked DNA replication forks via replication fork reversal (RFR). RuvA specifically binds to HJ cruciform DNA, conferring on it an open structure. The RuvB hexamer acts as an ATP-dependent pump, pulling dsDNA into and through the RuvAB complex. HJ branch migration allows RuvC to scan DNA until it finds its consensus sequence, where it cleaves and resolves the cruciform DNA. This Mycoplasmopsis synoviae (strain 53) (Mycoplasma synoviae) protein is Holliday junction branch migration complex subunit RuvA.